The chain runs to 428 residues: Proline--tRNA ligase (428 aa).

Belongs to the class-II aminoacyl-tRNA synthetase family. ProS type 2 subfamily. Homodimer.

The protein localises to the cytoplasm. The catalysed reaction is tRNA(Pro) + L-proline + ATP = L-prolyl-tRNA(Pro) + AMP + diphosphate. Its function is as follows. Catalyzes the attachment of proline to tRNA(Pro) in a two-step reaction: proline is first activated by ATP to form Pro-AMP and then transferred to the acceptor end of tRNA(Pro). This is Proline--tRNA ligase from Rickettsia typhi (strain ATCC VR-144 / Wilmington).